Reading from the N-terminus, the 339-residue chain is Ketol-acid reductoisomerase (NADP(+)) (339 aa).

Positions 1–182 (MKVYYDSDAD…GGGRSGVIET (182 aa)) constitute a KARI N-terminal Rossmann domain. NADP(+) contacts are provided by residues 24-27 (YGSQ), arginine 48, serine 51, serine 53, and 83-86 (DEHQ). The active site involves histidine 108. Position 134 (glycine 134) interacts with NADP(+). Residues 183 to 328 (TFREEVETDL…ARLRKMMPWI (146 aa)) form the KARI C-terminal knotted domain. Residues aspartate 191, glutamate 195, glutamate 227, and glutamate 231 each coordinate Mg(2+). Residue serine 252 participates in substrate binding.

It belongs to the ketol-acid reductoisomerase family. Mg(2+) serves as cofactor.

It catalyses the reaction (2R)-2,3-dihydroxy-3-methylbutanoate + NADP(+) = (2S)-2-acetolactate + NADPH + H(+). It carries out the reaction (2R,3R)-2,3-dihydroxy-3-methylpentanoate + NADP(+) = (S)-2-ethyl-2-hydroxy-3-oxobutanoate + NADPH + H(+). It functions in the pathway amino-acid biosynthesis; L-isoleucine biosynthesis; L-isoleucine from 2-oxobutanoate: step 2/4. Its pathway is amino-acid biosynthesis; L-valine biosynthesis; L-valine from pyruvate: step 2/4. Involved in the biosynthesis of branched-chain amino acids (BCAA). Catalyzes an alkyl-migration followed by a ketol-acid reduction of (S)-2-acetolactate (S2AL) to yield (R)-2,3-dihydroxy-isovalerate. In the isomerase reaction, S2AL is rearranged via a Mg-dependent methyl migration to produce 3-hydroxy-3-methyl-2-ketobutyrate (HMKB). In the reductase reaction, this 2-ketoacid undergoes a metal-dependent reduction by NADPH to yield (R)-2,3-dihydroxy-isovalerate. This is Ketol-acid reductoisomerase (NADP(+)) from Zymomonas mobilis subsp. mobilis (strain ATCC 31821 / ZM4 / CP4).